We begin with the raw amino-acid sequence, 529 residues long: Calcium/calmodulin-dependent protein kinase type II subunit gamma (529 aa).

The 259-residue stretch at 14–272 (YQLFEELGKG…ADQALKHPWV (259 aa)) folds into the Protein kinase domain. ATP-binding positions include 20 to 28 (LGKGAFSVV) and lysine 43. Aspartate 136 acts as the Proton acceptor in catalysis. Positions 283-292 (HRQETVECLR) are autoinhibitory domain. Phosphothreonine; by autocatalysis occurs at positions 287, 306, and 307. The calmodulin-binding stretch occupies residues 294–316 (FNARRKLKGAILTTMLVSRNFSA). 5 positions are modified to phosphoserine: serine 311, serine 334, serine 349, serine 352, and serine 455. Positions 324–353 (KSDGGVKKRKSSSSVHLMPQSNNKNSLVSP) are disordered. The span at 342-352 (PQSNNKNSLVS) shows a compositional bias: polar residues.

It belongs to the protein kinase superfamily. CAMK Ser/Thr protein kinase family. CaMK subfamily. As to quaternary structure, CAMK2 is composed of 4 different chains: alpha (CAMK2A), beta (CAMK2B), gamma (CAMK2G), and delta (CAMK2D). The different isoforms assemble into homo- or heteromultimeric holoenzymes composed of 12 subunits with two hexameric rings stacked one on top of the other. In terms of processing, autophosphorylation of Thr-287 following activation by Ca(2+)/calmodulin. Phosphorylation of Thr-287 locks the kinase into an activated state.

The protein resides in the sarcoplasmic reticulum membrane. It catalyses the reaction L-seryl-[protein] + ATP = O-phospho-L-seryl-[protein] + ADP + H(+). The catalysed reaction is L-threonyl-[protein] + ATP = O-phospho-L-threonyl-[protein] + ADP + H(+). Its activity is regulated as follows. Activated by Ca(2+)/calmodulin. Binding of calmodulin results in conformational change that relieves intrasteric autoinhibition and allows autophosphorylation of Thr-287 which turns the kinase in a constitutively active form and confers to the kinase a Ca(2+)-independent activity. Its function is as follows. Calcium/calmodulin-dependent protein kinase that functions autonomously after Ca(2+)/calmodulin-binding and autophosphorylation, and is involved in sarcoplasmic reticulum Ca(2+) transport in skeletal muscle and may function in dendritic spine and synapse formation and neuronal plasticity. In slow-twitch muscles, is involved in regulation of sarcoplasmic reticulum (SR) Ca(2+) transport and in fast-twitch muscle participates in the control of Ca(2+) release from the SR through phosphorylation of the ryanodine receptor-coupling factor triadin. In the central nervous system, it is involved in the regulation of neurite formation and arborization. It may participate in the promotion of dendritic spine and synapse formation and maintenance of synaptic plasticity which enables long-term potentiation (LTP) and hippocampus-dependent learning. In response to interferon-gamma (IFN-gamma) stimulation, catalyzes phosphorylation of STAT1, stimulating the JAK-STAT signaling pathway. The polypeptide is Calcium/calmodulin-dependent protein kinase type II subunit gamma (Camk2g) (Mus musculus (Mouse)).